Reading from the N-terminus, the 541-residue chain is ATP synthase subunit beta (541 aa).

Residues 1–65 (MAKAVTSSKG…TPVKKEERAK (65 aa)) form a disordered region. Composition is skewed to basic and acidic residues over residues 25-36 (VKKDASKSKDAS) and 52-65 (AAKDTPVKKEERAK). 214–221 (GGAGVGKT) contributes to the ATP binding site.

It belongs to the ATPase alpha/beta chains family. In terms of assembly, F-type ATPases have 2 components, CF(1) - the catalytic core - and CF(0) - the membrane proton channel. CF(1) has five subunits: alpha(3), beta(3), gamma(1), delta(1), epsilon(1). CF(0) has three main subunits: a(1), b(2) and c(9-12). The alpha and beta chains form an alternating ring which encloses part of the gamma chain. CF(1) is attached to CF(0) by a central stalk formed by the gamma and epsilon chains, while a peripheral stalk is formed by the delta and b chains.

The protein resides in the cell inner membrane. The enzyme catalyses ATP + H2O + 4 H(+)(in) = ADP + phosphate + 5 H(+)(out). Functionally, produces ATP from ADP in the presence of a proton gradient across the membrane. The catalytic sites are hosted primarily by the beta subunits. The protein is ATP synthase subunit beta of Bartonella tribocorum (strain CIP 105476 / IBS 506).